The primary structure comprises 401 residues: Putative phosphatidylinositol 4-phosphate 5-kinase 11 (401 aa).

A PIPK domain is found at Met-1–Phe-390. Positions Ser-242–Arg-260 are enriched in polar residues. Residues Ser-242–Cys-268 are disordered. The interval Tyr-350 to Ser-371 is activation loop.

The catalysed reaction is a 1,2-diacyl-sn-glycero-3-phospho-(1D-myo-inositol 4-phosphate) + ATP = a 1,2-diacyl-sn-glycero-3-phospho-(1D-myo-inositol-4,5-bisphosphate) + ADP + H(+). The polypeptide is Putative phosphatidylinositol 4-phosphate 5-kinase 11 (PIP5K11) (Arabidopsis thaliana (Mouse-ear cress)).